The sequence spans 889 residues: Mitochondrial intermediate peptidase (889 aa).

A mitochondrion-targeting transit peptide spans 1–30 (MASTSKNAQRAAASVAHSYHVCLARRMSRL). Residues 60-112 (SSSLAAQRVQRPTSAGPILTNPISDHEKDNDELRSLFDAPPTSSSANHLRSSG) form a disordered region. Residues 83–94 (SDHEKDNDELRS) are compositionally biased toward basic and acidic residues. The span at 100–112 (PTSSSANHLRSSG) shows a compositional bias: polar residues. His670 contacts Zn(2+). Glu671 is a catalytic residue. The Zn(2+) site is built by His674 and His677.

The protein belongs to the peptidase M3 family. Zn(2+) serves as cofactor.

The protein localises to the mitochondrion matrix. It carries out the reaction Release of an N-terminal octapeptide as second stage of processing of some proteins imported into the mitochondrion.. Its function is as follows. Cleaves proteins, imported into the mitochondrion, to their mature size. While most mitochondrial precursor proteins are processed to the mature form in one step by mitochondrial processing peptidase (MPP), the sequential cleavage by MIP of an octapeptide after initial processing by MPP is a required step for a subgroup of nuclear-encoded precursor proteins destined for the matrix or the inner membrane. In Mycosarcoma maydis (Corn smut fungus), this protein is Mitochondrial intermediate peptidase (OCT1).